A 312-amino-acid polypeptide reads, in one-letter code: tRNA dimethylallyltransferase (312 aa).

Residue 17–24 coordinates ATP; the sequence is GPTASGKS. 19-24 serves as a coordination point for substrate; the sequence is TASGKS.

It belongs to the IPP transferase family. Monomer. Requires Mg(2+) as cofactor.

It carries out the reaction adenosine(37) in tRNA + dimethylallyl diphosphate = N(6)-dimethylallyladenosine(37) in tRNA + diphosphate. Catalyzes the transfer of a dimethylallyl group onto the adenine at position 37 in tRNAs that read codons beginning with uridine, leading to the formation of N6-(dimethylallyl)adenosine (i(6)A). This Zymomonas mobilis subsp. mobilis (strain ATCC 31821 / ZM4 / CP4) protein is tRNA dimethylallyltransferase.